Here is a 391-residue protein sequence, read N- to C-terminus: tRNA-specific 2-thiouridylase MnmA (391 aa).

ATP-binding positions include 9 to 16 (GMSGGVDS) and Met-35. The segment at 95 to 97 (NPD) is interaction with target base in tRNA. Catalysis depends on Cys-100, which acts as the Nucleophile. Cys-100 and Cys-196 are joined by a disulfide. Residue Gly-124 participates in ATP binding. Positions 146 to 148 (KDQ) are interaction with tRNA. The Cysteine persulfide intermediate role is filled by Cys-196. The segment at 308–309 (RY) is interaction with tRNA.

This sequence belongs to the MnmA/TRMU family.

It localises to the cytoplasm. The catalysed reaction is S-sulfanyl-L-cysteinyl-[protein] + uridine(34) in tRNA + AH2 + ATP = 2-thiouridine(34) in tRNA + L-cysteinyl-[protein] + A + AMP + diphosphate + H(+). Its function is as follows. Catalyzes the 2-thiolation of uridine at the wobble position (U34) of tRNA, leading to the formation of s(2)U34. The chain is tRNA-specific 2-thiouridylase MnmA from Burkholderia cenocepacia (strain HI2424).